The sequence spans 385 residues: NADH-quinone oxidoreductase subunit D 2 (385 aa).

It belongs to the complex I 49 kDa subunit family. In terms of assembly, NDH-1 is composed of 14 different subunits. Subunits NuoB, C, D, E, F, and G constitute the peripheral sector of the complex.

The protein resides in the cell membrane. It catalyses the reaction a quinone + NADH + 5 H(+)(in) = a quinol + NAD(+) + 4 H(+)(out). Functionally, NDH-1 shuttles electrons from NADH, via FMN and iron-sulfur (Fe-S) centers, to quinones in the respiratory chain. The immediate electron acceptor for the enzyme in this species is believed to be a menaquinone. Couples the redox reaction to proton translocation (for every two electrons transferred, four hydrogen ions are translocated across the cytoplasmic membrane), and thus conserves the redox energy in a proton gradient. This is NADH-quinone oxidoreductase subunit D 2 from Salinispora arenicola (strain CNS-205).